The chain runs to 316 residues: Cytochrome c oxidase assembly protein COX18, mitochondrial (316 aa).

Residues 164 to 184 form a helical membrane-spanning segment; sequence WKNALLPMVQIPLWVTVSMGI. Residues 185–213 lie on the Mitochondrial matrix side of the membrane; the sequence is RTLTETQLIESFYPSWFSALGFSSFDLSS. Residues 214–234 traverse the membrane as a helical segment; it reads PLVAMPLLAPILVGTLAVLNV. Over 235 to 274 the chain is Mitochondrial intermembrane; sequence ELNGRLMFSSSLSSQGIKTISRNSTRVQEAMTSILNVSRL. A helical membrane pass occupies residues 275–295; sequence GCVVMLAMSSQAPFLLSLYWI. Residues 296-316 lie on the Mitochondrial matrix side of the membrane; it reads SSQLFSLVQNIILNWIYPYQR.

The protein belongs to the OXA1/ALB3/YidC family. In terms of assembly, interacts with PNT1 and MSS2.

It is found in the mitochondrion inner membrane. Required for the insertion of integral membrane proteins into the mitochondrial inner membrane. Essential for the activity and assembly of cytochrome c oxidase. Plays a central role in the translocation and export of the C-terminal part of the COX2 protein into the mitochondrial intermembrane space. The polypeptide is Cytochrome c oxidase assembly protein COX18, mitochondrial (COX18) (Saccharomyces cerevisiae (strain ATCC 204508 / S288c) (Baker's yeast)).